Consider the following 448-residue polypeptide: Signal recognition particle 54 kDa protein (448 aa).

Residues 107-114 (GIQGSGKT), 189-193 (DTAGR), and 247-250 (TKLD) contribute to the GTP site.

The protein belongs to the GTP-binding SRP family. SRP54 subfamily. As to quaternary structure, part of the signal recognition particle protein translocation system, which is composed of SRP and FtsY. Archaeal SRP consists of a 7S RNA molecule of 300 nucleotides and two protein subunits: SRP54 and SRP19.

The protein localises to the cytoplasm. It carries out the reaction GTP + H2O = GDP + phosphate + H(+). Involved in targeting and insertion of nascent membrane proteins into the cytoplasmic membrane. Binds to the hydrophobic signal sequence of the ribosome-nascent chain (RNC) as it emerges from the ribosomes. The SRP-RNC complex is then targeted to the cytoplasmic membrane where it interacts with the SRP receptor FtsY. This is Signal recognition particle 54 kDa protein from Thermococcus gammatolerans (strain DSM 15229 / JCM 11827 / EJ3).